The primary structure comprises 154 residues: Transcriptional repressor NrdR (154 aa).

The segment at 3 to 34 is a zinc-finger region; that stretch reads CPYCRHPDSRVVDSREADDGQLIRRRRSCPEC. One can recognise an ATP-cone domain in the interval 46–136; that stretch reads LAVVKRSGVT…VYRSFESLAD (91 aa).

The protein belongs to the NrdR family. It depends on Zn(2+) as a cofactor.

Negatively regulates transcription of bacterial ribonucleotide reductase nrd genes and operons by binding to NrdR-boxes. The chain is Transcriptional repressor NrdR from Salinispora tropica (strain ATCC BAA-916 / DSM 44818 / JCM 13857 / NBRC 105044 / CNB-440).